Consider the following 488-residue polypeptide: E3 ubiquitin-protein ligase TRIM39 (488 aa).

The RING-type zinc finger occupies C29–R70. A B box-type zinc finger spans residues R102–M143. Zn(2+) contacts are provided by C107, H110, C129, and H135. A coiled-coil region spans residues E181–K250. Interaction with CDKN1A stretches follow at residues K268–A307 and T359–E488. Residues S289–P484 form the B30.2/SPRY domain.

It belongs to the TRIM/RBCC family. Interacts with MOAP1. Interacts with CDKN1A. Autoubiquitinated.

It localises to the cytoplasm. It is found in the cytosol. Its subcellular location is the mitochondrion. The protein resides in the nucleus. The enzyme catalyses S-ubiquitinyl-[E2 ubiquitin-conjugating enzyme]-L-cysteine + [acceptor protein]-L-lysine = [E2 ubiquitin-conjugating enzyme]-L-cysteine + N(6)-ubiquitinyl-[acceptor protein]-L-lysine.. It participates in protein modification; protein ubiquitination. Functionally, E3 ubiquitin-protein ligase. May facilitate apoptosis by inhibiting APC/C-Cdh1-mediated poly-ubiquitination and subsequent proteasome-mediated degradation of the pro-apoptotic protein MOAP1. Regulates the G1/S transition of the cell cycle and DNA damage-induced G2 arrest by stabilizing CDKN1A/p21. Positively regulates CDKN1A/p21 stability by competing with DTL for CDKN1A/p21 binding, therefore disrupting DCX(DTL) E3 ubiquitin ligase complex-mediated CDKN1A/p21 ubiquitination and degradation. The chain is E3 ubiquitin-protein ligase TRIM39 (Trim39) from Rattus norvegicus (Rat).